Here is a 699-residue protein sequence, read N- to C-terminus: TPR repeat-containing thioredoxin TTL1 (699 aa).

The tract at residues 1–211 (MPKSVKPISE…SSSRSSSTVA (211 aa)) is disordered. Residues 9 to 20 (SESDKLSDHLRD) are compositionally biased toward basic and acidic residues. Residues Ser-39 and Ser-42 each carry the phosphoserine modification. Low complexity-rich tracts occupy residues 52 to 70 (TTTTTTTTTSSSSSSSSGS) and 83 to 135 (RSNS…TSPA). A compositionally biased stretch (gly residues) spans 166–182 (SGTGTYGHGSIMRGGGI). A compositionally biased stretch (low complexity) spans 195 to 210 (NSPVNVGSSSRSSSTV). 7 TPR repeats span residues 227-260 (SEEVKRVGNEMYRKGLFNEALKLYDRAIALSPTN), 262-294 (AYRSNRAAALIGLSRIGEAVKECEDAVRSDPNY), 296-328 (RAHHRLALLLIRLGQVNSARKHLCFLGRPSDPM), 419-452 (AYIYFVKAQIEMALGRFENAVMAAEKASQIDPRC), 465-498 (VARARARGNDLYKSERYTEASSAYAEGLRLDPCN), 499-532 (AILYCNRAACWFKLGMWERSIEDCNQALRYQPSY), and 534-566 (KPLLRRAASNSKMERWGAAVSDYEALIRELPHD). The Thioredoxin domain maps to 605-691 (QFKSAMNLPG…IVCPSKEVLE (87 aa)).

In terms of tissue distribution, expressed in the root elongation zone, stele, root cap, embryo vascular system, leaf axilar buds, silique abscission zone and guard cells.

Functionally, involved in responses to osmotic stress and abscisic acid (ABA). May act as a positive regulator of ABA signaling during germination and seedling development under stress. In Arabidopsis thaliana (Mouse-ear cress), this protein is TPR repeat-containing thioredoxin TTL1 (TTL1).